A 419-amino-acid polypeptide reads, in one-letter code: L-2-hydroxyglutarate dehydrogenase, mitochondrial (419 aa).

The transit peptide at 1–51 (MVPALRYLVGACGRARGGFAGDFPGASGLASGRPRPLCGGSRSASTSSFDI) directs the protein to the mitochondrion. An N6-acetyllysine mark is found at Lys104 and Lys173.

The protein belongs to the L2HGDH family. FAD is required as a cofactor.

Its subcellular location is the mitochondrion. It catalyses the reaction (S)-2-hydroxyglutarate + A = 2-oxoglutarate + AH2. The chain is L-2-hydroxyglutarate dehydrogenase, mitochondrial (L2HGDH) from Pongo abelii (Sumatran orangutan).